Reading from the N-terminus, the 223-residue chain is MALVRGGWLWRQSSILRRWKRNWFALWLDGTLGYYHDETAQDEEDRVVIHFNVRDIKVGQECQDVQPPEGRSRDGLLTVNLREGSRLHLCAETRDDAIAWKTALMEANSTPAPAGATVPPRSRRVCPKVRCTSLSWKPCKVERRIWVRVYSPYQDYYEVVPPNAHEATYVRSYYGPPYGPGVTHVIVREDPCYSSGAPLAMGMLAGAATGAALGSLMWSPCWF.

The PH domain occupies 2–109 (ALVRGGWLWR…WKTALMEANS (108 aa)).

In terms of assembly, homodimer. Interacts (via PH domain) with MYO1C. Interacts (via PH domain) with MYO7A. Binds transducins. In terms of tissue distribution, highly expressed in photoreceptor cells, oligodendrocytes and throughout the myelinated parts of the central nervous system. Detected in brain, liver, kidney, spleen and trachea.

Its subcellular location is the membrane. The protein resides in the cytoplasm. This chain is Pleckstrin homology domain-containing family B member 1 (Plekhb1), found in Rattus norvegicus (Rat).